A 150-amino-acid chain; its full sequence is UPF0756 membrane protein NTHI1233 (150 aa).

Transmembrane regions (helical) follow at residues 1-21 (MTLQ…LGVL), 52-72 (YGVK…LVSG), 81-101 (GFLS…AWLA), and 123-143 (IIGV…AGIL).

The protein belongs to the UPF0756 family.

It is found in the cell membrane. This chain is UPF0756 membrane protein NTHI1233, found in Haemophilus influenzae (strain 86-028NP).